Here is a 525-residue protein sequence, read N- to C-terminus: GMP synthase [glutamine-hydrolyzing] (525 aa).

In terms of domain architecture, Glutamine amidotransferase type-1 spans 9–207; it reads RILILDFGSQ…VLEISGCEAL (199 aa). Catalysis depends on C86, which acts as the Nucleophile. Active-site residues include H181 and E183. Residues 208-400 enclose the GMPS ATP-PPase domain; that stretch reads WTPANIVEDA…LGLPYDMVYR (193 aa). 235-241 contributes to the ATP binding site; sequence SGGVDSS.

Homodimer.

The enzyme catalyses XMP + L-glutamine + ATP + H2O = GMP + L-glutamate + AMP + diphosphate + 2 H(+). Its pathway is purine metabolism; GMP biosynthesis; GMP from XMP (L-Gln route): step 1/1. In terms of biological role, catalyzes the synthesis of GMP from XMP. In Ectopseudomonas mendocina (strain ymp) (Pseudomonas mendocina), this protein is GMP synthase [glutamine-hydrolyzing].